The following is a 344-amino-acid chain: L-rhamnose-proton symporter (344 aa).

Helical transmembrane passes span 4–24, 38–58, 68–88, 101–121, 137–157, 175–195, 214–234, 259–279, 290–310, and 323–343; these read AITM…CFYA, WSVG…ALLL, FSLS…IGNI, MGIG…TPII, TLLG…AGQL, LVLA…MNAA, LPSY…FCFI, VLLS…YAWG, ISWM…GLVL, and VLSL…IGMA.

This sequence belongs to the L-rhamnose transporter (TC 2.A.7.6) family.

The protein resides in the cell inner membrane. The enzyme catalyses L-rhamnopyranose(in) + H(+)(in) = L-rhamnopyranose(out) + H(+)(out). In terms of biological role, uptake of L-rhamnose across the cytoplasmic membrane with the concomitant transport of protons into the cell (symport system). The chain is L-rhamnose-proton symporter from Shigella flexneri.